The sequence spans 94 residues: Co-chaperonin GroES (94 aa).

It belongs to the GroES chaperonin family. Heptamer of 7 subunits arranged in a ring. Interacts with the chaperonin GroEL.

It is found in the cytoplasm. In terms of biological role, together with the chaperonin GroEL, plays an essential role in assisting protein folding. The GroEL-GroES system forms a nano-cage that allows encapsulation of the non-native substrate proteins and provides a physical environment optimized to promote and accelerate protein folding. GroES binds to the apical surface of the GroEL ring, thereby capping the opening of the GroEL channel. The polypeptide is Co-chaperonin GroES (Streptococcus equinus (Streptococcus bovis)).